Here is a 443-residue protein sequence, read N- to C-terminus: Xaa-Pro dipeptidase (443 aa).

5 residues coordinate Mn(2+): Asp-246, Asp-257, His-339, Glu-384, and Glu-423.

Belongs to the peptidase M24B family. Bacterial-type prolidase subfamily. It depends on Mn(2+) as a cofactor.

The enzyme catalyses Xaa-L-Pro dipeptide + H2O = an L-alpha-amino acid + L-proline. Splits dipeptides with a prolyl residue in the C-terminal position. The protein is Xaa-Pro dipeptidase of Yersinia pseudotuberculosis serotype I (strain IP32953).